The primary structure comprises 485 residues: ATP synthase subunit beta (485 aa).

158-165 (GGAGVGKT) contacts ATP.

It belongs to the ATPase alpha/beta chains family. In terms of assembly, F-type ATPases have 2 components, CF(1) - the catalytic core - and CF(0) - the membrane proton channel. CF(1) has five subunits: alpha(3), beta(3), gamma(1), delta(1), epsilon(1). CF(0) has four main subunits: a(1), b(1), b'(1) and c(9-12).

It localises to the cell inner membrane. The catalysed reaction is ATP + H2O + 4 H(+)(in) = ADP + phosphate + 5 H(+)(out). Produces ATP from ADP in the presence of a proton gradient across the membrane. The catalytic sites are hosted primarily by the beta subunits. This is ATP synthase subunit beta from Erythrobacter litoralis (strain HTCC2594).